Here is a 116-residue protein sequence, read N- to C-terminus: Alpha-amylase inhibitor 5 (116 aa).

5 disulfide bridges follow: Cys-4–Cys-55, Cys-18–Cys-44, Cys-27–Cys-77, Cys-45–Cys-95, and Cys-57–Cys-106.

It belongs to the protease inhibitor I6 (cereal trypsin/alpha-amylase inhibitor) family.

It is found in the secreted. Its function is as follows. Alpha-amylase inhibitor. This chain is Alpha-amylase inhibitor 5, found in Sorghum bicolor (Sorghum).